Consider the following 528-residue polypeptide: GTPase Obg (528 aa).

The region spanning 2-159 is the Obg domain; sequence ASFVDRVVLH…SDIVLELKSI (158 aa). Residues 160 to 343 form the OBG-type G domain; it reads ADIALVGFPS…LGFAMAEIVQ (184 aa). Residues 166–173, 191–195, 212–215, 295–298, and 324–326 each bind GTP; these read GFPSAGKS, FTTLI, DVPG, NKVD, and SAT. Positions 173 and 193 each coordinate Mg(2+). An OCT domain is found at 363–447; sequence PRAVNESGFK…DDGVVFDWEP (85 aa). Residues 471–490 are disordered; the sequence is DRPTRSQKRDEQIERREAKA.

It belongs to the TRAFAC class OBG-HflX-like GTPase superfamily. OBG GTPase family. In terms of assembly, monomer. The cofactor is Mg(2+).

It localises to the cytoplasm. An essential GTPase which binds GTP, GDP and possibly (p)ppGpp with moderate affinity, with high nucleotide exchange rates and a fairly low GTP hydrolysis rate. Plays a role in control of the cell cycle, stress response, ribosome biogenesis and in those bacteria that undergo differentiation, in morphogenesis control. The chain is GTPase Obg from Paenarthrobacter aurescens (strain TC1).